Here is a 185-residue protein sequence, read N- to C-terminus: Iron-sulfur assembly protein 2 (185 aa).

Fe cation-binding residues include Cys89, Cys175, and Cys177.

Belongs to the HesB/IscA family.

The protein localises to the mitochondrion matrix. Functionally, involved in the assembly of mitochondrial and cytoplasmic iron-sulfur proteins. Probably involved in the binding of an intermediate of Fe/S cluster assembly. The chain is Iron-sulfur assembly protein 2 (ISA2) from Saccharomyces cerevisiae (strain ATCC 204508 / S288c) (Baker's yeast).